A 212-amino-acid polypeptide reads, in one-letter code: 3-isopropylmalate dehydratase small subunit (212 aa).

Belongs to the LeuD family. LeuD type 1 subfamily. Heterodimer of LeuC and LeuD.

It catalyses the reaction (2R,3S)-3-isopropylmalate = (2S)-2-isopropylmalate. It functions in the pathway amino-acid biosynthesis; L-leucine biosynthesis; L-leucine from 3-methyl-2-oxobutanoate: step 2/4. In terms of biological role, catalyzes the isomerization between 2-isopropylmalate and 3-isopropylmalate, via the formation of 2-isopropylmaleate. The protein is 3-isopropylmalate dehydratase small subunit of Thiobacillus denitrificans (strain ATCC 25259 / T1).